The primary structure comprises 245 residues: uncharacterized protein (245 aa).

An HTH gntR-type domain is found at 29 to 96; sequence RSLIEATFQR…AQRGFHVTPM (68 aa). Residues 56–75 constitute a DNA-binding region (H-T-H motif); it reads IEDLKSRYEVSGGTVREALS.

This is an uncharacterized protein from Paraburkholderia xenovorans (strain LB400).